A 247-amino-acid chain; its full sequence is DNA polymerase sliding clamp (247 aa).

This sequence belongs to the PCNA family. In terms of assembly, homotrimer. The subunits circularize to form a toroid; DNA passes through its center. Replication factor C (RFC) is required to load the toroid on the DNA.

Sliding clamp subunit that acts as a moving platform for DNA processing. Responsible for tethering the catalytic subunit of DNA polymerase and other proteins to DNA during high-speed replication. In Methanospirillum hungatei JF-1 (strain ATCC 27890 / DSM 864 / NBRC 100397 / JF-1), this protein is DNA polymerase sliding clamp.